The primary structure comprises 110 residues: Cytochrome c6 (110 aa).

Positions 1–25 are cleaved as a signal peptide; it reads MKKLVSSVILALILFGFSWVSPAFA. Residues Cys39, Cys42, His43, and Met83 each contribute to the heme c site.

The protein belongs to the cytochrome c family. PetJ subfamily. Monomer. Post-translationally, binds 1 heme c group covalently per subunit.

It localises to the cellular thylakoid lumen. Its function is as follows. Functions as an electron carrier between membrane-bound cytochrome b6-f and photosystem I in oxygenic photosynthesis. The chain is Cytochrome c6 from Gloeothece citriformis (strain PCC 7424) (Cyanothece sp. (strain PCC 7424)).